Reading from the N-terminus, the 657-residue chain is Probable intron-encoded endonuclease aI2 (657 aa).

Residues Met1 to Gly245 form a COX1 exons 1 to 2 encoded region. The next 6 helical transmembrane spans lie at Ile19–Val39, Leu69–Leu89, Leu103–Leu123, Ala152–Val172, Pro188–Leu208, and Met269–Val289. A COX1 intron 2 encoded region spans residues Gln246–Phe657.

In the C-terminal section; belongs to the LAGLIDADG endonuclease family. This sequence in the N-terminal section; belongs to the heme-copper respiratory oxidase family. Post-translationally, the mature protein may arise from proteolytic cleavage of an in-frame translation of COX1 exons 1 and 2 plus intron 2, containing the aI2 open reading frame.

The protein resides in the mitochondrion. It localises to the membrane. Mitochondrial DNA endonuclease involved in intron homing. This Debaryomyces hansenii (strain ATCC 36239 / CBS 767 / BCRC 21394 / JCM 1990 / NBRC 0083 / IGC 2968) (Yeast) protein is Probable intron-encoded endonuclease aI2 (aI2).